Consider the following 172-residue polypeptide: Interferon tau-3 (172 aa).

2 disulfide bridges follow: cysteine 1-cysteine 99 and cysteine 29-cysteine 139. N-linked (GlcNAc...) asparagine glycosylation occurs at asparagine 78.

This sequence belongs to the alpha/beta interferon family. IFN-alphaII subfamily. In terms of tissue distribution, constitutively and exclusively expressed in the mononuclear cells of the extraembryonic trophectoderm.

It is found in the secreted. Its function is as follows. Paracrine hormone primarily responsible for maternal recognition of pregnancy. Interacts with endometrial receptors, probably type I interferon receptors, and blocks estrogen receptor expression, preventing the estrogen-induced increase in oxytocin receptor expression in the endometrium. This results in the suppression of the pulsatile endometrial release of the luteolytic hormone prostaglandin F2-alpha, hindering the regression of the corpus luteum (luteolysis) and therefore a return to ovarian cyclicity. This, and a possible direct effect of IFN-tau on prostaglandin synthesis, leads in turn to continued ovarian progesterone secretion, which stimulates the secretion by the endometrium of the nutrients required for the growth of the conceptus. In summary, displays particularly high antiviral and antiproliferative potency concurrently with particular weak cytotoxicity, high antiluteolytic activity and immunomodulatory properties. In contrast with other IFNs, IFN-tau is not virally inducible. In Bos taurus (Bovine), this protein is Interferon tau-3 (IFNT3).